The primary structure comprises 418 residues: F-box/kelch-repeat protein SKIP20 (418 aa).

An F-box domain is found at 14–61 (DLIPGLPEELAIECLVRVPFQFHSSIKSVCRSWKCVISSRSFIKERIG). The disordered stretch occupies residues 79–104 (PSPAMMEGGEMSQKKKEEEEGESQMT). 4 Kelch repeats span residues 104–150 (TQQL…AIQD), 153–206 (KVLL…SVGS), 208–255 (KVYV…SMAT), and 258–314 (GFCV…EFPG).

As to quaternary structure, part of a SCF (ASK-cullin-F-box) protein ligase complex. Interacts with SKP1A/ASK1 and SPK1B/ASK2.

It is found in the nucleus. It participates in protein modification; protein ubiquitination. Functionally, component of SCF(ASK-cullin-F-box) E3 ubiquitin ligase complexes, which may mediate the ubiquitination and subsequent proteasomal degradation of target proteins. In Arabidopsis thaliana (Mouse-ear cress), this protein is F-box/kelch-repeat protein SKIP20 (SKIP20).